A 95-amino-acid chain; its full sequence is Large ribosomal subunit protein bL28 (95 aa).

Belongs to the bacterial ribosomal protein bL28 family.

The protein is Large ribosomal subunit protein bL28 of Orientia tsutsugamushi (strain Ikeda) (Rickettsia tsutsugamushi).